We begin with the raw amino-acid sequence, 95 residues long: Aspartyl/glutamyl-tRNA(Asn/Gln) amidotransferase subunit C (95 aa).

The protein belongs to the GatC family. As to quaternary structure, heterotrimer of A, B and C subunits.

It carries out the reaction L-glutamyl-tRNA(Gln) + L-glutamine + ATP + H2O = L-glutaminyl-tRNA(Gln) + L-glutamate + ADP + phosphate + H(+). The enzyme catalyses L-aspartyl-tRNA(Asn) + L-glutamine + ATP + H2O = L-asparaginyl-tRNA(Asn) + L-glutamate + ADP + phosphate + 2 H(+). Functionally, allows the formation of correctly charged Asn-tRNA(Asn) or Gln-tRNA(Gln) through the transamidation of misacylated Asp-tRNA(Asn) or Glu-tRNA(Gln) in organisms which lack either or both of asparaginyl-tRNA or glutaminyl-tRNA synthetases. The reaction takes place in the presence of glutamine and ATP through an activated phospho-Asp-tRNA(Asn) or phospho-Glu-tRNA(Gln). The protein is Aspartyl/glutamyl-tRNA(Asn/Gln) amidotransferase subunit C of Pseudomonas putida (strain ATCC 700007 / DSM 6899 / JCM 31910 / BCRC 17059 / LMG 24140 / F1).